The primary structure comprises 208 residues: Uracil phosphoribosyltransferase (208 aa).

Residues R78, R103, and 130 to 138 (DPMLATGGS) each bind 5-phospho-alpha-D-ribose 1-diphosphate. Uracil-binding positions include I193 and 198-200 (GDA). D199 is a binding site for 5-phospho-alpha-D-ribose 1-diphosphate.

Belongs to the UPRTase family. It depends on Mg(2+) as a cofactor.

It carries out the reaction UMP + diphosphate = 5-phospho-alpha-D-ribose 1-diphosphate + uracil. It functions in the pathway pyrimidine metabolism; UMP biosynthesis via salvage pathway; UMP from uracil: step 1/1. Allosterically activated by GTP. Catalyzes the conversion of uracil and 5-phospho-alpha-D-ribose 1-diphosphate (PRPP) to UMP and diphosphate. This is Uracil phosphoribosyltransferase from Enterobacter sp. (strain 638).